Here is a 321-residue protein sequence, read N- to C-terminus: DNA packaging protein (321 aa).

Residues 1–196 (MLSYDRILNF…DERRKTKFGQ (196 aa)) are ATPase. 13–20 (GARGIGKS) provides a ligand contact to ATP. A DNA-binding region spans residues 222–321 (KRSKNSKFVF…YEMFKKMRVQ (100 aa)).

The protein belongs to the phi29likevirus gp16 family. As to quaternary structure, homopentamer. Interacts with the packaging RNA (pRNA). Part of a DNA-gp3-gp16 complex.

The enzyme catalyses ATP + H2O = ADP + phosphate + H(+). ATPase required for the genome encapsidation reaction. Part of the active packaging motor via the binding to the packaging RNA (pRNA), itself fixed to the head-tail connector at the unique portal vertex of the prohead. Binds and supercoils the pre-formed, unit-length DNA bound to gp3 to produce an initiation complex for DNA packaging. Provides the energy to actively pump the viral DNA into the prohead. Approximately one molecule of ATP is used in the packaging of 2 bp of viral DNA. ATP hydrolysis results in a conformational change that causes the arginine/lysine finger of one subunit to move into the active site of its neighbor, where it interacts with the negatively charged oxygens on the gamma-phosphate of ATP. After packaging, the ATPase and the pRNA are released from the prohead. This chain is DNA packaging protein (16), found in Bacillus subtilis (Bacteriophage B103).